The primary structure comprises 180 residues: Regulator of G-protein signaling 8 (180 aa).

Residue serine 26 is modified to Phosphoserine. The region spanning 56–171 (SFDVLLSHKY…FLRSKMYLDL (116 aa)) is the RGS domain.

In terms of assembly, interacts with GNAO1 and GNAI3. In terms of tissue distribution, expressed at high levels in brain. Very little expression detected in other tissues. Detected in Purkinje cells in the cerebellum.

It localises to the cell membrane. Its subcellular location is the membrane. It is found in the perikaryon. The protein resides in the cell projection. The protein localises to the dendrite. It localises to the nucleus. In terms of biological role, regulates G protein-coupled receptor signaling cascades, including signaling via muscarinic acetylcholine receptor CHRM2 and dopamine receptor DRD2. Inhibits signal transduction by increasing the GTPase activity of G protein alpha subunits, thereby driving them into their inactive GDP-bound form. Modulates the activity of potassium channels that are activated in response to DRD2 and CHRM2 signaling. The sequence is that of Regulator of G-protein signaling 8 (Rgs8) from Rattus norvegicus (Rat).